The primary structure comprises 131 residues: Small ribosomal subunit protein uS9 (131 aa).

The disordered stretch occupies residues 102–131 (AGFLTRDPRMKERRKYGLKKARKAPQFSKR). A compositionally biased stretch (basic residues) spans 112-131 (KERRKYGLKKARKAPQFSKR).

It belongs to the universal ribosomal protein uS9 family.

The protein is Small ribosomal subunit protein uS9 of Desulfitobacterium hafniense (strain DSM 10664 / DCB-2).